The following is a 338-amino-acid chain: Glyceraldehyde-3-phosphate dehydrogenase 2 (338 aa).

NAD(+) is bound by residues 12 to 13 (RI), aspartate 34, and arginine 79. D-glyceraldehyde 3-phosphate is bound by residues 150 to 152 (SCT), threonine 181, 210 to 211 (TG), and arginine 233. Cysteine 151 serves as the catalytic Nucleophile. Position 315 (asparagine 315) interacts with NAD(+).

This sequence belongs to the glyceraldehyde-3-phosphate dehydrogenase family. In terms of assembly, homotetramer.

It localises to the cytoplasm. The enzyme catalyses D-glyceraldehyde 3-phosphate + phosphate + NAD(+) = (2R)-3-phospho-glyceroyl phosphate + NADH + H(+). Its pathway is carbohydrate degradation; glycolysis; pyruvate from D-glyceraldehyde 3-phosphate: step 1/5. The polypeptide is Glyceraldehyde-3-phosphate dehydrogenase 2 (GPD2) (Mucor circinelloides f. lusitanicus (Mucor racemosus var. lusitanicus)).